A 386-amino-acid chain; its full sequence is Cytochrome b (386 aa).

The next 4 membrane-spanning stretches (helical) occupy residues 39 to 59 (FGSL…FLAM), 83 to 104 (FMLK…YIHM), 119 to 139 (WNIG…GYVL), and 184 to 204 (FFSL…LHIL). Heme b is bound by residues H89 and H103. The heme b site is built by H188 and H202. H207 contacts a ubiquinone. 4 consecutive transmembrane segments (helical) span residues 232–252 (YKDL…CYFM), 294–314 (LGGV…PFIH), 326–346 (LGKI…WLGA), and 353–374 (YIMI…LVPL).

The protein belongs to the cytochrome b family. The main subunits of complex b-c1 are: cytochrome b, cytochrome c1 and the Rieske protein. Heme b serves as cofactor.

It localises to the mitochondrion inner membrane. Component of the ubiquinol-cytochrome c reductase complex (complex III or cytochrome b-c1 complex) that is part of the mitochondrial respiratory chain. The b-c1 complex mediates electron transfer from ubiquinol to cytochrome c. Contributes to the generation of a proton gradient across the mitochondrial membrane that is then used for ATP synthesis. The chain is Cytochrome b (MT-CYB) from Sarcophyton glaucum (Toadstool umbrella leather coral).